The following is a 126-amino-acid chain: Flagellar protein FliT (126 aa).

The required for homodimerization stretch occupies residues 1-50; sequence MVSPHRLLKDYQQLLSLSQKILHLAISGQWDTLVEQEIVYVQSVEGLVNT. The fliD binding stretch occupies residues 60 to 98; the sequence is MRLHLRQILQEVMDNEAKVKQLLQKRMDELSSLMGQSLK.

Belongs to the FliT family. Homodimer. Interacts with FliD and FlhC.

It localises to the cytoplasm. The protein resides in the cytosol. Dual-function protein that regulates the transcription of class 2 flagellar operons and that also acts as an export chaperone for the filament-capping protein FliD. As a transcriptional regulator, acts as an anti-FlhDC factor; it directly binds FlhC, thus inhibiting the binding of the FlhC/FlhD complex to class 2 promoters, resulting in decreased expression of class 2 flagellar operons. As a chaperone, effects FliD transition to the membrane by preventing its premature polymerization, and by directing it to the export apparatus. The protein is Flagellar protein FliT of Pectobacterium atrosepticum (strain SCRI 1043 / ATCC BAA-672) (Erwinia carotovora subsp. atroseptica).